Here is a 445-residue protein sequence, read N- to C-terminus: MKQRKFFGTDGIRGRVGAGKMTPELALKLGWAAGRVLSRNGTQKVIIGKDTRISGYLFESALEAGLSAAGLNVLLLGPMPTPAVAYLTRTFRAEAGVVISASHNPYYDNGIKFFSTDGSKLDDAIELEIEAELEKPLVCVESHLLGKARRIEDAAGRYIEYCKGNFPADQTLEGLKIVVDCAHGATYHIAPNVFRELGADVIAIGDKPDGLNINDKVGATSMAKICETVLAEKADLGIALDGDGDRIMMVNRHGEVVDGDQILYILAVDAQKRGILKGGVVGTLMSNLGLDLALQALDIPFVRSKVGDRYVMEMLRENEWRIGGENSGHILNLDHGTTGDGIVAGILVLAAMRRQNASLEQLTEPMKMLPQVLVNVRFEGDSNPLDTDAVKSAQADVELQLGARGRVLLRKSGTEPLIRVMVEGDDHPQVLAHANRIADAVKAAC.

Ser-102 functions as the Phosphoserine intermediate in the catalytic mechanism. The Mg(2+) site is built by Ser-102, Asp-241, Asp-243, and Asp-245. Ser-102 is subject to Phosphoserine.

This sequence belongs to the phosphohexose mutase family. The cofactor is Mg(2+). In terms of processing, activated by phosphorylation.

It carries out the reaction alpha-D-glucosamine 1-phosphate = D-glucosamine 6-phosphate. Functionally, catalyzes the conversion of glucosamine-6-phosphate to glucosamine-1-phosphate. In Shewanella frigidimarina (strain NCIMB 400), this protein is Phosphoglucosamine mutase 1.